A 145-amino-acid chain; its full sequence is D-aminoacyl-tRNA deacylase (145 aa).

The Gly-cisPro motif, important for rejection of L-amino acids signature appears at 137–138 (GP).

The protein belongs to the DTD family. As to quaternary structure, homodimer.

The protein localises to the cytoplasm. It carries out the reaction glycyl-tRNA(Ala) + H2O = tRNA(Ala) + glycine + H(+). The catalysed reaction is a D-aminoacyl-tRNA + H2O = a tRNA + a D-alpha-amino acid + H(+). In terms of biological role, an aminoacyl-tRNA editing enzyme that deacylates mischarged D-aminoacyl-tRNAs. Also deacylates mischarged glycyl-tRNA(Ala), protecting cells against glycine mischarging by AlaRS. Acts via tRNA-based rather than protein-based catalysis; rejects L-amino acids rather than detecting D-amino acids in the active site. By recycling D-aminoacyl-tRNA to D-amino acids and free tRNA molecules, this enzyme counteracts the toxicity associated with the formation of D-aminoacyl-tRNA entities in vivo and helps enforce protein L-homochirality. The chain is D-aminoacyl-tRNA deacylase from Pseudomonas savastanoi pv. phaseolicola (strain 1448A / Race 6) (Pseudomonas syringae pv. phaseolicola (strain 1448A / Race 6)).